Here is a 295-residue protein sequence, read N- to C-terminus: Formamidopyrimidine-DNA glycosylase (295 aa).

Proline 2 (schiff-base intermediate with DNA) is an active-site residue. Glutamate 3 serves as the catalytic Proton donor. Lysine 61 (proton donor; for beta-elimination activity) is an active-site residue. DNA contacts are provided by histidine 95, arginine 117, and arginine 159. The FPG-type zinc-finger motif lies at 245-279; that stretch reads HAYGREGEACERCGTPIRRVAFMNRSSYFCPVCQP. Catalysis depends on arginine 269, which acts as the Proton donor; for delta-elimination activity.

Belongs to the FPG family. Monomer. Zn(2+) is required as a cofactor.

It carries out the reaction Hydrolysis of DNA containing ring-opened 7-methylguanine residues, releasing 2,6-diamino-4-hydroxy-5-(N-methyl)formamidopyrimidine.. The catalysed reaction is 2'-deoxyribonucleotide-(2'-deoxyribose 5'-phosphate)-2'-deoxyribonucleotide-DNA = a 3'-end 2'-deoxyribonucleotide-(2,3-dehydro-2,3-deoxyribose 5'-phosphate)-DNA + a 5'-end 5'-phospho-2'-deoxyribonucleoside-DNA + H(+). Functionally, involved in base excision repair of DNA damaged by oxidation or by mutagenic agents. Acts as a DNA glycosylase that recognizes and removes damaged bases. Has a preference for oxidized purines, such as 7,8-dihydro-8-oxoguanine (8-oxoG). Has AP (apurinic/apyrimidinic) lyase activity and introduces nicks in the DNA strand. Cleaves the DNA backbone by beta-delta elimination to generate a single-strand break at the site of the removed base with both 3'- and 5'-phosphates. This is Formamidopyrimidine-DNA glycosylase from Nocardioides sp. (strain ATCC BAA-499 / JS614).